The sequence spans 60 residues: Cytotoxin 1 (60 aa).

4 cysteine pairs are disulfide-bonded: C3/C21, C14/C38, C42/C53, and C54/C59.

Belongs to the three-finger toxin family. Short-chain subfamily. Type IA cytotoxin sub-subfamily. In terms of assembly, monomer in solution; Homodimer and oligomer in the presence of negatively charged lipids forming a pore with a size ranging between 20 and 30 angstroms. In terms of tissue distribution, expressed by the venom gland.

It is found in the secreted. The protein resides in the target cell membrane. Functionally, basic protein that binds to cell membrane and depolarizes cardiomyocytes. This cytotoxin also possesses lytic activity on many other cells, including red blood cells. Interaction with sulfatides in the cell membrane induces pore formation and cell internalization and is responsible for cytotoxicity in cardiomyocytes. It targets the mitochondrial membrane and induces mitochondrial swelling and fragmentation. Inhibits protein kinases C. It binds to the integrin alpha-V/beta-3 with a moderate affinity. In Naja pallida (Red spitting cobra), this protein is Cytotoxin 1.